Consider the following 284-residue polypeptide: Isopentenyl-diphosphate Delta-isomerase II, chloroplastic (284 aa).

The transit peptide at 1-45 directs the protein to the chloroplast; that stretch reads MSASSLFNLPLIRLRSLALSSSFSSFRFAHRPLSSISPRKLPNFR. Position 46 is an N-acetylalanine (Ala-46). Position 88 (Lys-88) interacts with substrate. The Mg(2+) site is built by His-92 and His-104. Residues 102 to 254 enclose the Nudix hydrolase domain; that stretch reads LLHRAFSVFL…GLKLSPWFRL (153 aa). Residues Arg-123 and Lys-127 each contribute to the substrate site. Residue Cys-139 is part of the active site. Residue Ser-140 participates in substrate binding. The Nudix box signature appears at 140–170; that stretch reads SHPLYRESELIQDNALGVRNAAQRKLLDELG. Mg(2+)-binding residues include Glu-199 and Glu-201. Glu-201 is an active-site residue.

Belongs to the IPP isomerase type 1 family. Mg(2+) serves as cofactor.

The protein resides in the plastid. The protein localises to the chloroplast. The enzyme catalyses isopentenyl diphosphate = dimethylallyl diphosphate. It functions in the pathway isoprenoid biosynthesis; dimethylallyl diphosphate biosynthesis; dimethylallyl diphosphate from isopentenyl diphosphate: step 1/1. It participates in porphyrin-containing compound metabolism; chlorophyll biosynthesis. Functionally, catalyzes the 1,3-allylic rearrangement of the homoallylic substrate isopentenyl (IPP) to its highly electrophilic allylic isomer, dimethylallyl diphosphate (DMAPP). The sequence is that of Isopentenyl-diphosphate Delta-isomerase II, chloroplastic (IPP2) from Arabidopsis thaliana (Mouse-ear cress).